A 528-amino-acid chain; its full sequence is Beta-galactoside alpha-2,6-sialyltransferase 2 (528 aa).

At 1-10 (MKPNLKQWKQ) the chain is on the cytoplasmic side. The helical; Signal-anchor for type II membrane protein transmembrane segment at 11–31 (LMLFGIFAWGLLFLVIFIYFT) threads the bilayer. At 32 to 528 (DSNSAEPVPS…CPERNNFPPL (497 aa)) the chain is on the lumenal side. Asparagine 167, asparagine 308, and asparagine 338 each carry an N-linked (GlcNAc...) asparagine glycan. Intrachain disulfides connect cysteine 254-cysteine 519, cysteine 297-cysteine 448, and cysteine 466-cysteine 477.

It belongs to the glycosyltransferase 29 family.

It is found in the golgi apparatus. Its subcellular location is the golgi stack membrane. The catalysed reaction is a beta-D-galactoside + CMP-N-acetyl-beta-neuraminate = an N-acetyl-alpha-neuraminyl-(2-&gt;6)-beta-D-galactosyl derivative + CMP + H(+). Transfers sialic acid from the donor of substrate CMP-sialic acid to galactose containing acceptor substrates. In Gallus gallus (Chicken), this protein is Beta-galactoside alpha-2,6-sialyltransferase 2 (ST6GAL2).